The chain runs to 295 residues: uncharacterized protein (295 aa).

The span at 57–67 (RKLLVKQKRKS) shows a compositional bias: basic residues. Residues 57-94 (RKLLVKQKRKSNKEFQSNIIKKRKDEERKGTLKTEQAN) form a disordered region. Over residues 79-88 (RKDEERKGTL) the composition is skewed to basic and acidic residues. Coiled coils occupy residues 87–116 (TLKTEQANEEELLQRSRLELERKAKKYDQY) and 259–286 (DVLTLRDKKLEERRKFLERDYAIKLGER).

The protein localises to the nucleus. This is an uncharacterized protein from Schizosaccharomyces pombe (strain 972 / ATCC 24843) (Fission yeast).